The chain runs to 934 residues: Complement component C6 (934 aa).

The signal sequence occupies residues 1 to 21 (MTRHLTLCFILLVMLIDKSEA). Intrachain disulfides connect cysteine 22-cysteine 61, cysteine 24-cysteine 65, cysteine 35-cysteine 73, cysteine 39-cysteine 78, cysteine 82-cysteine 117, cysteine 93-cysteine 127, cysteine 96-cysteine 133, cysteine 140-cysteine 151, cysteine 146-cysteine 164, cysteine 158-cysteine 173, and cysteine 180-cysteine 218. TSP type-1 domains are found at residues 22 to 79 (CFCD…QTCP) and 81 to 134 (NCVL…KLCK). The 38-residue stretch at 138–175 (TNCKNKFLCDSGRCIPSKLECNGENDCGDNSDERNCGR) folds into the LDL-receptor class A domain. Ca(2+)-binding residues include leucine 156, asparagine 159, glutamate 161, aspartate 163, aspartate 169, and glutamate 170. Positions 176–522 (TKPVCTRIYT…EYAAKFDPCQ (347 aa)) constitute an MACPF domain. Residues 278–290 (FFPIPIFHFSEKN) form a beta stranded membrane-spanning segment. Asparagine 324 carries N-linked (GlcNAc...) asparagine glycosylation. 16 cysteine pairs are disulfide-bonded: cysteine 399/cysteine 420, cysteine 499/cysteine 623, cysteine 521/cysteine 570, cysteine 523/cysteine 539, cysteine 526/cysteine 541, cysteine 543/cysteine 552, cysteine 577/cysteine 611, cysteine 589/cysteine 601, cysteine 644/cysteine 686, cysteine 672/cysteine 699, cysteine 704/cysteine 746, cysteine 732/cysteine 761, cysteine 773/cysteine 823, cysteine 784/cysteine 801, cysteine 786/cysteine 837, and cysteine 793/cysteine 816. The chain crosses the membrane as a beta stranded span at residues 402-415 (YETKKLKFLYMEIH). Residues 523-553 (CAPCPNNGRPRLSGTECLCVCQSGTYGENCE) enclose the EGF-like domain. In terms of domain architecture, TSP type-1 3 spans 565–612 (DGNWGCWSSWSACNAAYRRSRTRECNNPAPQRGGQSCGGKDQQEEDCT). CCP regions lie at residues 611–688 (CTVS…RCLP) and 689–765 (DRTW…EQAI). 2 consecutive Sushi domains span residues 642–701 (SGCS…ECQR) and 702–763 (TSCL…TCEQ). Residues 642-934 (SGCSQPPLPE…EILNPGRCPD (293 aa)) are C5b-binding domain. The segment at 766–840 (LTKSKDLCPP…FVHSGSCQEG (75 aa)) is factor I module (FIM) 1. One can recognise a Kazal-like 1 domain in the interval 785–839 (ICMSPEEDCSAYSEDLCIFDGGSSQYFTSSACKFLAGKCLNNTQSHFVHSGSCQE). N-linked (GlcNAc...) asparagine glycosylation is found at asparagine 825, asparagine 855, and asparagine 872. The segment at 858-934 (KRVSCGYNTC…EILNPGRCPD (77 aa)) is factor I module (FIM) 2. Cystine bridges form between cysteine 862–cysteine 873, cysteine 867–cysteine 919, cysteine 880–cysteine 897, cysteine 882–cysteine 932, and cysteine 888–cysteine 912. The Kazal-like 2 domain occupies 876 to 934 (HTSNCVCLLPPQCSKDENQLYCVKIGSSMREKTVNICTLGAVRCANIKVEILNPGRCPD).

Belongs to the complement C6/C7/C8/C9 family. Component of the membrane attack complex (MAC), composed of complement C5b, C6, C7, C8A, C8B, C8G and multiple copies of the pore-forming subunit C9. All cysteine residues are assumed to be cross-linked to one another. Individual modules containing an even number of conserved cysteine residues are supposed to have disulfide linkages only within the same module.

The protein localises to the secreted. Its subcellular location is the target cell membrane. Membrane attack complex (MAC) assembly is inhibited by CD59, thereby protecting self-cells from damage during complement activation. MAC assembly is also inhibited by clusterin (CLU) chaperones that inhibit polymerization of C9. In terms of biological role, component of the membrane attack complex (MAC), a multiprotein complex activated by the complement cascade, which inserts into a target cell membrane and forms a pore, leading to target cell membrane rupture and cell lysis. The MAC is initiated by proteolytic cleavage of C5 into complement C5b in response to the classical, alternative, lectin and GZMK complement pathways. The complement pathways consist in a cascade of proteins that leads to phagocytosis and breakdown of pathogens and signaling that strengthens the adaptive immune system. Together with component C5b, involved in MAC complex assembly: complement C5b and C6 associate with the outer leaflet of target cell membrane, reducing the energy for membrane bending. The polypeptide is Complement component C6 (Mus musculus (Mouse)).